The primary structure comprises 545 residues: Glucose-6-phosphate isomerase (545 aa).

The active-site Proton donor is the Glu345. Catalysis depends on residues His376 and Lys514.

The protein belongs to the GPI family.

Its subcellular location is the cytoplasm. The catalysed reaction is alpha-D-glucose 6-phosphate = beta-D-fructose 6-phosphate. It functions in the pathway carbohydrate biosynthesis; gluconeogenesis. Its pathway is carbohydrate degradation; glycolysis; D-glyceraldehyde 3-phosphate and glycerone phosphate from D-glucose: step 2/4. Catalyzes the reversible isomerization of glucose-6-phosphate to fructose-6-phosphate. The chain is Glucose-6-phosphate isomerase from Leptothrix cholodnii (strain ATCC 51168 / LMG 8142 / SP-6) (Leptothrix discophora (strain SP-6)).